A 149-amino-acid polypeptide reads, in one-letter code: HMG1/2-like protein (149 aa).

Basic and acidic residues-rich tracts occupy residues 1–15 (MKGGKSKGESKKAET) and 35–44 (KGKEPKDPNK). Disordered regions lie at residues 1–52 (MKGG…PSAF) and 112–149 (AYNKKLEGKDDEEGSDKSKSEVNDEDEDEEDEEDEDDD). Residues 45 to 114 (PKRPPSAFFV…EYEITLQAYN (70 aa)) constitute a DNA-binding region (HMG box). Over residues 134 to 149 (NDEDEDEEDEEDEDDD) the composition is skewed to acidic residues.

Belongs to the HMGB family.

It is found in the nucleus. The sequence is that of HMG1/2-like protein from Vicia faba (Broad bean).